Reading from the N-terminus, the 208-residue chain is Thymidylate kinase (208 aa).

Residue glycine 10–threonine 17 participates in ATP binding.

Belongs to the thymidylate kinase family.

It catalyses the reaction dTMP + ATP = dTDP + ADP. Its function is as follows. Phosphorylation of dTMP to form dTDP in both de novo and salvage pathways of dTTP synthesis. In Bacillus cereus (strain 03BB102), this protein is Thymidylate kinase.